A 106-amino-acid polypeptide reads, in one-letter code: Toxin-like structure LSTX-D3 (106 aa).

An N-terminal signal peptide occupies residues 1 to 20 (MMKVLVVVALLVTLISYSSS). Positions 21–41 (EGIDDLEADELLSLMANEQTR) are excised as a propeptide. Intrachain disulfides connect Cys-45/Cys-60, Cys-52/Cys-69, Cys-59/Cys-85, and Cys-71/Cys-83.

This sequence belongs to the neurotoxin 19 (CSTX) family. 02 (D7) subfamily. As to expression, expressed by the venom gland.

The protein localises to the secreted. This Lycosa singoriensis (Wolf spider) protein is Toxin-like structure LSTX-D3.